The chain runs to 664 residues: DNA primase (664 aa).

The CHC2-type zinc-finger motif lies at 40-64; it reads CPFHKEKTPSFTVSPDKQFYYCFGC. A compositionally biased stretch (basic and acidic residues) spans 94–104; that stretch reads GMDVPREERGG. The interval 94 to 115 is disordered; the sequence is GMDVPREERGGRGHTPRQPTDS. The region spanning 262-344 is the Toprim domain; the sequence is DEIMVVEGYM…GKRVRFLFLP (83 aa). Mg(2+) is bound by residues E268, D312, and D314. A disordered region spans residues 483 to 521; sequence PRKSWNKDKKPWDGKKWDGKKKWDKGGRGDFKAPQRTPV. Over residues 487-515 the composition is skewed to basic and acidic residues; the sequence is WNKDKKPWDGKKWDGKKKWDKGGRGDFKA.

It belongs to the DnaG primase family. In terms of assembly, monomer. Interacts with DnaB. Zn(2+) is required as a cofactor. The cofactor is Mg(2+).

It catalyses the reaction ssDNA + n NTP = ssDNA/pppN(pN)n-1 hybrid + (n-1) diphosphate.. Functionally, RNA polymerase that catalyzes the synthesis of short RNA molecules used as primers for DNA polymerase during DNA replication. The sequence is that of DNA primase from Pseudomonas aeruginosa (strain ATCC 15692 / DSM 22644 / CIP 104116 / JCM 14847 / LMG 12228 / 1C / PRS 101 / PAO1).